The following is a 342-amino-acid chain: tRNA N6-adenosine threonylcarbamoyltransferase (342 aa).

Residues histidine 114 and histidine 118 each coordinate Fe cation. Residues 136 to 140 (LVSGG), aspartate 169, glycine 182, aspartate 186, and asparagine 275 each bind substrate. Aspartate 301 lines the Fe cation pocket.

The protein belongs to the KAE1 / TsaD family. Fe(2+) serves as cofactor.

Its subcellular location is the cytoplasm. The catalysed reaction is L-threonylcarbamoyladenylate + adenosine(37) in tRNA = N(6)-L-threonylcarbamoyladenosine(37) in tRNA + AMP + H(+). Functionally, required for the formation of a threonylcarbamoyl group on adenosine at position 37 (t(6)A37) in tRNAs that read codons beginning with adenine. Is involved in the transfer of the threonylcarbamoyl moiety of threonylcarbamoyl-AMP (TC-AMP) to the N6 group of A37, together with TsaE and TsaB. TsaD likely plays a direct catalytic role in this reaction. The protein is tRNA N6-adenosine threonylcarbamoyltransferase of Streptococcus pyogenes serotype M3 (strain ATCC BAA-595 / MGAS315).